Consider the following 100-residue polypeptide: Large ribosomal subunit protein uL23 (100 aa).

The protein belongs to the universal ribosomal protein uL23 family. Part of the 50S ribosomal subunit. Contacts protein L29, and trigger factor when it is bound to the ribosome.

In terms of biological role, one of the early assembly proteins it binds 23S rRNA. One of the proteins that surrounds the polypeptide exit tunnel on the outside of the ribosome. Forms the main docking site for trigger factor binding to the ribosome. The chain is Large ribosomal subunit protein uL23 from Synechococcus sp. (strain CC9605).